Consider the following 106-residue polypeptide: Small ribosomal subunit protein bS20 (106 aa).

A disordered region spans residues 1–32 (MAQKKPKRNLSALKRHRQSLKRRLRNKAKKSA).

Part of the 30S ribosomal subunit.

In terms of biological role, one of the primary rRNA binding proteins, it binds directly to 16S rRNA where it nucleates assembly of the bottom of the body of the 30S subunit, by binding to several RNA helices of the 16S rRNA. This Thermus thermophilus (strain ATCC 27634 / DSM 579 / HB8) protein is Small ribosomal subunit protein bS20 (rpsT).